Here is a 359-residue protein sequence, read N- to C-terminus: Peptide chain release factor 1 (359 aa).

Position 236 is an N5-methylglutamine (Gln236). The disordered stretch occupies residues 288-307; it reads QDEQDAERKSTIGTGDRSER. A compositionally biased stretch (basic and acidic residues) spans 293 to 307; sequence AERKSTIGTGDRSER.

Belongs to the prokaryotic/mitochondrial release factor family. Post-translationally, methylated by PrmC. Methylation increases the termination efficiency of RF1.

It localises to the cytoplasm. Its function is as follows. Peptide chain release factor 1 directs the termination of translation in response to the peptide chain termination codons UAG and UAA. The protein is Peptide chain release factor 1 (prfA) of Streptococcus gordonii (strain Challis / ATCC 35105 / BCRC 15272 / CH1 / DL1 / V288).